Consider the following 400-residue polypeptide: Enoyl-[acyl-carrier-protein] reductase [NADH] (400 aa).

Residues 48–53, 74–75, 111–112, and 139–140 contribute to the NAD(+) site; these read GSSSGY, FE, DA, and LA. Substrate is bound at residue Y225. The active-site Proton donor is the Y235. Residues K244 and 273 to 275 contribute to the NAD(+) site; that span reads VVT.

This sequence belongs to the TER reductase family. As to quaternary structure, monomer.

It catalyses the reaction a 2,3-saturated acyl-[ACP] + NAD(+) = a (2E)-enoyl-[ACP] + NADH + H(+). It participates in lipid metabolism; fatty acid biosynthesis. In terms of biological role, involved in the final reduction of the elongation cycle of fatty acid synthesis (FAS II). Catalyzes the reduction of a carbon-carbon double bond in an enoyl moiety that is covalently linked to an acyl carrier protein (ACP). In Shewanella piezotolerans (strain WP3 / JCM 13877), this protein is Enoyl-[acyl-carrier-protein] reductase [NADH].